The following is a 177-amino-acid chain: TRAF-interacting protein with FHA domain-containing protein A (177 aa).

In terms of domain architecture, FHA spans 48–104; it reads VAFGRDYNVCRYPLLSNRVSRIQFNLQFFKHFNCSTTAIEIKNLSKKNKLYVDNLEL.

The protein belongs to the TIFA family. Interacts with traf6.

Its subcellular location is the cytoplasm. Adapter molecule that plays a key role in the activation of pro-inflammatory NF-kappa-B signaling following detection of bacterial pathogen-associated molecular pattern metabolites (PAMPs). Promotes activation of an innate immune response by inducing the oligomerization and polyubiquitination of TRAF6, which leads to the activation of TAK1 and IKK through a proteasome-independent mechanism. In Xenopus tropicalis (Western clawed frog), this protein is TRAF-interacting protein with FHA domain-containing protein A.